We begin with the raw amino-acid sequence, 573 residues long: Excitatory amino acid transporter 2 (573 aa).

The span at 1–11 shows a compositional bias: polar residues; the sequence is MASTEGANNMP. Residues 1–29 form a disordered region; the sequence is MASTEGANNMPKQVEVRMHDSHLSSEEPK. Topologically, residues 1-44 are cytoplasmic; sequence MASTEGANNMPKQVEVRMHDSHLSSEEPKHRNLGMRMCDKLGKN. 4 positions are modified to phosphoserine: S3, S21, S24, and S25. Basic and acidic residues predominate over residues 14–29; the sequence is VEVRMHDSHLSSEEPK. Residue C38 is the site of S-palmitoyl cysteine attachment. A run of 3 helical transmembrane segments spans residues 45–64, 88–108, and 121–142; these read LLLSLTVFGVILGAVCGGLL, MLKMLILPLIISSLITGLSGL, and MVYYMSTTIIAAVLGVILVLAI. Residues N205 and N215 are each glycosylated (N-linked (GlcNAc...) asparagine). A run of 3 helical transmembrane segments spans residues 235–258, 268–295, and 317–338; these read FKDGMNVLGLIGFFIAFGIAMGKM, FFNILNEIVMKLVIMIMWYSPLGIACLI, and ITVIVGLIIHGGIFLPLIYFVV. An intramembrane region (discontinuously helical) is located at residues 344-374; sequence FSFFAGIFQAWITALGTASSAGTLPVTFRCL. 361–363 lines the L-aspartate pocket; that stretch reads ASS. The chain crosses the membrane as a helical span at residues 384-410; the sequence is VTRFVLPVGATINMDGTALYEAVAAIF. G392, T394, and N396 together coordinate Na(+). L-aspartate contacts are provided by residues T400, 441–445, D474, and N481; that span reads IPSAG. The segment at residues 424 to 457 is an intramembrane region (discontinuously helical); sequence IVTVSLTATLASIGAASIPSAGLVTMLLILTAVG. Residues 471–492 traverse the membrane as a helical segment; it reads WLLDRMRTSVNVVGDSFGAGIV. Na(+)-binding residues include N481 and D485. 4 positions are modified to phosphoserine: S505, S520, S531, and S533. Residue Y538 is modified to Phosphotyrosine. Residues S543, S559, and S563 each carry the phosphoserine modification.

It belongs to the dicarboxylate/amino acid:cation symporter (DAACS) (TC 2.A.23) family. SLC1A2 subfamily. Homotrimer. Interacts with AJUBA. Glycosylated. Post-translationally, palmitoylation at Cys-38 is not required for correct subcellular localization, but is important for glutamate uptake activity. Localized in brain and is highly enriched in the Purkinje cell layer in cerebellum.

Its subcellular location is the cell membrane. It catalyses the reaction K(+)(in) + L-glutamate(out) + 3 Na(+)(out) + H(+)(out) = K(+)(out) + L-glutamate(in) + 3 Na(+)(in) + H(+)(in). It carries out the reaction D-aspartate(out) + K(+)(in) + 3 Na(+)(out) + H(+)(out) = D-aspartate(in) + K(+)(out) + 3 Na(+)(in) + H(+)(in). The catalysed reaction is K(+)(in) + L-aspartate(out) + 3 Na(+)(out) + H(+)(out) = K(+)(out) + L-aspartate(in) + 3 Na(+)(in) + H(+)(in). Sodium-dependent, high-affinity amino acid transporter that mediates the uptake of L-glutamate and also L-aspartate and D-aspartate. Functions as a symporter that transports one amino acid molecule together with two or three Na(+) ions and one proton, in parallel with the counter-transport of one K(+) ion. Mediates Cl(-) flux that is not coupled to amino acid transport; this avoids the accumulation of negative charges due to aspartate and Na(+) symport. Essential for the rapid removal of released glutamate from the synaptic cleft, and for terminating the postsynaptic action of glutamate. This is Excitatory amino acid transporter 2 (Slc1a2) from Rattus norvegicus (Rat).